The following is a 228-amino-acid chain: LexA repressor (228 aa).

Residues 26-46 (FDEMKDALDLRSKSGIHRLIT) constitute a DNA-binding region (H-T-H motif). Residues Ser-149 and Lys-187 each act as for autocatalytic cleavage activity in the active site.

This sequence belongs to the peptidase S24 family. In terms of assembly, homodimer.

The catalysed reaction is Hydrolysis of Ala-|-Gly bond in repressor LexA.. Represses a number of genes involved in the response to DNA damage (SOS response), including recA and lexA. In the presence of single-stranded DNA, RecA interacts with LexA causing an autocatalytic cleavage which disrupts the DNA-binding part of LexA, leading to derepression of the SOS regulon and eventually DNA repair. The sequence is that of LexA repressor from Cereibacter sphaeroides (strain ATCC 17025 / ATH 2.4.3) (Rhodobacter sphaeroides).